The chain runs to 292 residues: Mycothiol acetyltransferase (292 aa).

N-acetyltransferase domains lie at 2 to 138 (AEVV…PSAP) and 141 to 292 (VTVR…YAHS). E33 serves as a coordination point for 1D-myo-inositol 2-(L-cysteinylamino)-2-deoxy-alpha-D-glucopyranoside. 68-70 (AVV) serves as a coordination point for acetyl-CoA. The 1D-myo-inositol 2-(L-cysteinylamino)-2-deoxy-alpha-D-glucopyranoside site is built by E168, K215, and E225. Residues 229 to 231 (VAV) and 236 to 242 (QGRGLGR) each bind acetyl-CoA. Y263 serves as a coordination point for 1D-myo-inositol 2-(L-cysteinylamino)-2-deoxy-alpha-D-glucopyranoside. An acetyl-CoA-binding site is contributed by 268–273 (NAAALH).

The protein belongs to the acetyltransferase family. MshD subfamily. Monomer.

It catalyses the reaction 1D-myo-inositol 2-(L-cysteinylamino)-2-deoxy-alpha-D-glucopyranoside + acetyl-CoA = mycothiol + CoA + H(+). Its function is as follows. Catalyzes the transfer of acetyl from acetyl-CoA to desacetylmycothiol (Cys-GlcN-Ins) to form mycothiol. This chain is Mycothiol acetyltransferase, found in Tsukamurella paurometabola (strain ATCC 8368 / DSM 20162 / CCUG 35730 / CIP 100753 / JCM 10117 / KCTC 9821 / NBRC 16120 / NCIMB 702349 / NCTC 13040) (Corynebacterium paurometabolum).